Consider the following 241-residue polypeptide: Ubiquinone biosynthesis O-methyltransferase (241 aa).

Residues Arg46, Gly66, Asp87, and Met131 each contribute to the S-adenosyl-L-methionine site.

The protein belongs to the methyltransferase superfamily. UbiG/COQ3 family.

The enzyme catalyses a 3-demethylubiquinol + S-adenosyl-L-methionine = a ubiquinol + S-adenosyl-L-homocysteine + H(+). It carries out the reaction a 3-(all-trans-polyprenyl)benzene-1,2-diol + S-adenosyl-L-methionine = a 2-methoxy-6-(all-trans-polyprenyl)phenol + S-adenosyl-L-homocysteine + H(+). It functions in the pathway cofactor biosynthesis; ubiquinone biosynthesis. In terms of biological role, O-methyltransferase that catalyzes the 2 O-methylation steps in the ubiquinone biosynthetic pathway. The sequence is that of Ubiquinone biosynthesis O-methyltransferase from Bordetella bronchiseptica (strain ATCC BAA-588 / NCTC 13252 / RB50) (Alcaligenes bronchisepticus).